The following is an 88-amino-acid chain: MANTVQARKRARQAVKQNEHNSSLRSKLRTSIKAVRKAIEAGDKAAAAKVFAATQSTIDKIADKKIAHKNTAARQKSRLSAAIKAMAA.

The interval 1-28 is disordered; it reads MANTVQARKRARQAVKQNEHNSSLRSKL.

This sequence belongs to the bacterial ribosomal protein bS20 family.

Its function is as follows. Binds directly to 16S ribosomal RNA. The protein is Small ribosomal subunit protein bS20 of Polynucleobacter necessarius subsp. necessarius (strain STIR1).